Reading from the N-terminus, the 71-residue chain is Translation initiation factor IF-1 (71 aa).

In terms of domain architecture, S1-like spans 1-71 (MANDVIEIEG…TKGRITYRFR (71 aa)).

This sequence belongs to the IF-1 family. Component of the 30S ribosomal translation pre-initiation complex which assembles on the 30S ribosome in the order IF-2 and IF-3, IF-1 and N-formylmethionyl-tRNA(fMet); mRNA recruitment can occur at any time during PIC assembly.

It is found in the cytoplasm. One of the essential components for the initiation of protein synthesis. Stabilizes the binding of IF-2 and IF-3 on the 30S subunit to which N-formylmethionyl-tRNA(fMet) subsequently binds. Helps modulate mRNA selection, yielding the 30S pre-initiation complex (PIC). Upon addition of the 50S ribosomal subunit IF-1, IF-2 and IF-3 are released leaving the mature 70S translation initiation complex. The polypeptide is Translation initiation factor IF-1 (Leuconostoc mesenteroides subsp. mesenteroides (strain ATCC 8293 / DSM 20343 / BCRC 11652 / CCM 1803 / JCM 6124 / NCDO 523 / NBRC 100496 / NCIMB 8023 / NCTC 12954 / NRRL B-1118 / 37Y)).